Reading from the N-terminus, the 679-residue chain is Glycine--tRNA ligase beta subunit (679 aa).

Belongs to the class-II aminoacyl-tRNA synthetase family. In terms of assembly, tetramer of two alpha and two beta subunits.

The protein resides in the cytoplasm. It catalyses the reaction tRNA(Gly) + glycine + ATP = glycyl-tRNA(Gly) + AMP + diphosphate. The polypeptide is Glycine--tRNA ligase beta subunit (Streptococcus pyogenes serotype M6 (strain ATCC BAA-946 / MGAS10394)).